Consider the following 334-residue polypeptide: Zinc finger Ran-binding domain-containing protein 2 (334 aa).

RanBP2-type zinc fingers lie at residues 9-40 and 65-94; these read SDGD…EKTT and SAND…PKYA. Residues 117-334 form a disordered region; that stretch reads REESDGEYDE…SGSRTSSKKK (218 aa). Residues 150–163 show a composition bias toward acidic residues; sequence DKESEGEDEEDEDG. Residues 196–212 show a composition bias toward basic residues; sequence KKKKSNRRSRSKSRSSH. 2 stretches are compositionally biased toward low complexity: residues 213 to 224 and 258 to 285; these read SRSSSRSSSHSS and SRSS…SSSP. Residues 302 to 318 show a composition bias toward basic residues; that stretch reads RKKRRSRSRSPERRRRS. Positions 319 to 334 are enriched in low complexity; it reads SSGSSHSGSRTSSKKK.

It belongs to the ZRANB2 family.

It is found in the nucleus. Its function is as follows. May regulate alternative splicing by interfering with constitutive 5'-splice site selection. In Gallus gallus (Chicken), this protein is Zinc finger Ran-binding domain-containing protein 2.